The sequence spans 692 residues: Elongation factor G (692 aa).

The tr-type G domain maps to 8–282 (ENTRNIGIMA…AVIDYLPSPL (275 aa)). GTP is bound by residues 17–24 (AHIDAGKT), 81–85 (DTPGH), and 135–138 (NKMD).

The protein belongs to the TRAFAC class translation factor GTPase superfamily. Classic translation factor GTPase family. EF-G/EF-2 subfamily.

It localises to the cytoplasm. Functionally, catalyzes the GTP-dependent ribosomal translocation step during translation elongation. During this step, the ribosome changes from the pre-translocational (PRE) to the post-translocational (POST) state as the newly formed A-site-bound peptidyl-tRNA and P-site-bound deacylated tRNA move to the P and E sites, respectively. Catalyzes the coordinated movement of the two tRNA molecules, the mRNA and conformational changes in the ribosome. The polypeptide is Elongation factor G (Bacillus cereus (strain G9842)).